Consider the following 358-residue polypeptide: Biotin synthase (358 aa).

The 228-residue stretch at 50–277 (NEVQVSTLCS…KSHVRLSAGR (228 aa)) folds into the Radical SAM core domain. [4Fe-4S] cluster-binding residues include Cys-65, Cys-69, and Cys-72. [2Fe-2S] cluster is bound by residues Cys-109, Cys-140, Cys-200, and Arg-272.

The protein belongs to the radical SAM superfamily. Biotin synthase family. As to quaternary structure, homodimer. Requires [4Fe-4S] cluster as cofactor. It depends on [2Fe-2S] cluster as a cofactor.

It catalyses the reaction (4R,5S)-dethiobiotin + (sulfur carrier)-SH + 2 reduced [2Fe-2S]-[ferredoxin] + 2 S-adenosyl-L-methionine = (sulfur carrier)-H + biotin + 2 5'-deoxyadenosine + 2 L-methionine + 2 oxidized [2Fe-2S]-[ferredoxin]. It functions in the pathway cofactor biosynthesis; biotin biosynthesis; biotin from 7,8-diaminononanoate: step 2/2. Catalyzes the conversion of dethiobiotin (DTB) to biotin by the insertion of a sulfur atom into dethiobiotin via a radical-based mechanism. In Cellvibrio japonicus (strain Ueda107) (Pseudomonas fluorescens subsp. cellulosa), this protein is Biotin synthase.